The sequence spans 261 residues: Cytochrome c oxidase subunit 3 (261 aa).

Residues 1–15 (MAHQAHSYHMVDPSP) are Mitochondrial matrix-facing. Residues 16–34 (WPIFGAITALLTTSGLIMW) form a helical membrane-spanning segment. Over 35–40 (FHYNSI) the chain is Mitochondrial intermembrane. A helical transmembrane segment spans residues 41 to 66 (ALLTAGLLSMLLVMIQWWRDVVREST). Topologically, residues 67–72 (FQGHHT) are mitochondrial matrix. Residues 73-105 (PTVQKGLRYGMILFITSEAFFFLGFFWAFFHSS) traverse the membrane as a helical segment. Topologically, residues 106 to 128 (LAPTPELGGQWPPTGIKPLNPLE) are mitochondrial intermembrane. A helical membrane pass occupies residues 129 to 152 (VPLLNTAILLASGVTVTWAHHSIT). Residues 153–155 (EGN) lie on the Mitochondrial matrix side of the membrane. Residues 156–183 (RKQAIHALTLTILLGFYFTALQAMEYHE) form a helical membrane-spanning segment. At 184–190 (ASFSIAD) the chain is on the mitochondrial intermembrane side. A helical membrane pass occupies residues 191–223 (SVYGSTFFVATGFHGLHVIIGSSFLTICLLRLI). At 224 to 232 (KFHFTSNHH) the chain is on the mitochondrial matrix side. A helical membrane pass occupies residues 233–256 (FGFEAAAWYWHFVDIIWLFLYMSM). At 257–261 (YWWGS) the chain is on the mitochondrial intermembrane side.

Belongs to the cytochrome c oxidase subunit 3 family. In terms of assembly, component of the cytochrome c oxidase (complex IV, CIV), a multisubunit enzyme composed of 14 subunits. The complex is composed of a catalytic core of 3 subunits MT-CO1, MT-CO2 and MT-CO3, encoded in the mitochondrial DNA, and 11 supernumerary subunits COX4I, COX5A, COX5B, COX6A, COX6B, COX6C, COX7A, COX7B, COX7C, COX8 and NDUFA4, which are encoded in the nuclear genome. The complex exists as a monomer or a dimer and forms supercomplexes (SCs) in the inner mitochondrial membrane with NADH-ubiquinone oxidoreductase (complex I, CI) and ubiquinol-cytochrome c oxidoreductase (cytochrome b-c1 complex, complex III, CIII), resulting in different assemblies (supercomplex SCI(1)III(2)IV(1) and megacomplex MCI(2)III(2)IV(2)).

The protein resides in the mitochondrion inner membrane. The catalysed reaction is 4 Fe(II)-[cytochrome c] + O2 + 8 H(+)(in) = 4 Fe(III)-[cytochrome c] + 2 H2O + 4 H(+)(out). In terms of biological role, component of the cytochrome c oxidase, the last enzyme in the mitochondrial electron transport chain which drives oxidative phosphorylation. The respiratory chain contains 3 multisubunit complexes succinate dehydrogenase (complex II, CII), ubiquinol-cytochrome c oxidoreductase (cytochrome b-c1 complex, complex III, CIII) and cytochrome c oxidase (complex IV, CIV), that cooperate to transfer electrons derived from NADH and succinate to molecular oxygen, creating an electrochemical gradient over the inner membrane that drives transmembrane transport and the ATP synthase. Cytochrome c oxidase is the component of the respiratory chain that catalyzes the reduction of oxygen to water. Electrons originating from reduced cytochrome c in the intermembrane space (IMS) are transferred via the dinuclear copper A center (CU(A)) of subunit 2 and heme A of subunit 1 to the active site in subunit 1, a binuclear center (BNC) formed by heme A3 and copper B (CU(B)). The BNC reduces molecular oxygen to 2 water molecules using 4 electrons from cytochrome c in the IMS and 4 protons from the mitochondrial matrix. This is Cytochrome c oxidase subunit 3 (MT-CO3) from Coturnix japonica (Japanese quail).